The primary structure comprises 83 residues: High-potential iron-sulfur protein (83 aa).

Residues C43, C46, C61, and C75 each contribute to the [4Fe-4S] cluster site.

Belongs to the high-potential iron-sulfur protein (HiPIP) family. In terms of assembly, homodimer.

Its subcellular location is the periplasm. Specific class of high-redox-potential 4Fe-4S ferredoxins. Functions in anaerobic electron transport in most purple and in some other photosynthetic bacteria and in at least one genus (Paracoccus) of halophilic, denitrifying bacteria. This Marichromatium gracile (Chromatium gracile) protein is High-potential iron-sulfur protein (hip).